A 475-amino-acid chain; its full sequence is tRNA modification GTPase MnmE (475 aa).

3 residues coordinate (6S)-5-formyl-5,6,7,8-tetrahydrofolate: Arg24, Glu81, and Lys124. The TrmE-type G domain occupies 220-397; the sequence is GLSVVLAGQP…LRRELLRLVG (178 aa). K(+) is bound at residue Asn230. Residues 230–235, 249–255, 274–277, and 378–380 contribute to the GTP site; these read NVGKSS, TPIAGTT, DTAG, and SAR. Ser234 is a Mg(2+) binding site. Residues Thr249, Ile251, and Thr254 each contribute to the K(+) site. Thr255 contacts Mg(2+). Lys475 contacts (6S)-5-formyl-5,6,7,8-tetrahydrofolate.

Belongs to the TRAFAC class TrmE-Era-EngA-EngB-Septin-like GTPase superfamily. TrmE GTPase family. In terms of assembly, homodimer. Heterotetramer of two MnmE and two MnmG subunits. K(+) serves as cofactor.

It is found in the cytoplasm. Exhibits a very high intrinsic GTPase hydrolysis rate. Involved in the addition of a carboxymethylaminomethyl (cmnm) group at the wobble position (U34) of certain tRNAs, forming tRNA-cmnm(5)s(2)U34. This chain is tRNA modification GTPase MnmE, found in Cupriavidus necator (strain ATCC 17699 / DSM 428 / KCTC 22496 / NCIMB 10442 / H16 / Stanier 337) (Ralstonia eutropha).